The following is a 646-amino-acid chain: Aquaglycerol porin AQY3 (646 aa).

Positions 1 to 14 (MSYESGRSSSSSES) are enriched in low complexity. Disordered regions lie at residues 1-68 (MSYE…SRNK) and 175-262 (KNMD…KKRT). At 1-350 (MSYESGRSSS…AKIRYHMREP (350 aa)) the chain is on the cytoplasmic side. A compositionally biased stretch (basic and acidic residues) spans 19 to 41 (TLKEEPNGKIAWEESVKKSRENN). Polar residues predominate over residues 190–201 (TDISRGGSTTSV). The helical transmembrane segment at 351–371 (FAEFLGTLVLVIFGVGGNLQA) threads the bilayer. Over 372 to 383 (TVTKGSGGSYES) the chain is Extracellular. Residues 384–404 (LSFAWGFGCMLGVYVAGGISG) form a helical membrane-spanning segment. The Cytoplasmic portion of the chain corresponds to 405-427 (GHINPAVTISMAIFRKFPWKKVP). The NPA 1 signature appears at 408–410 (NPA). A helical membrane pass occupies residues 428–448 (VYIVAQIIGAYFGGAMAYGYF). Residues 449–481 (WSSITEFEGGPHIRTTATGACLFTDPKSYVTWR) lie on the Extracellular side of the membrane. Residues 482 to 502 (NAFFDEFIGASILVGCLMALL) traverse the membrane as a helical segment. Topologically, residues 503–509 (DDSNAPP) are cytoplasmic. Residues 510–530 (GNGMTALIIGFLVAAIGMALG) traverse the membrane as a helical segment. At 531-569 (YQTSFTINPARDLGPRIFASMIGYGPHAFHLTHWWWTWG) the chain is on the extracellular side. Positions 538–540 (NPA) match the NPA 2 motif. The helical transmembrane segment at 570–590 (AWGGPIAGGIAGALIYDIFIF) threads the bilayer. Residues 591–646 (TGCESPVNYPDNGYIENRVGKLLHAEFHQNDGTVSDESGVNSNSNTGSKKSVPTSS) are Cytoplasmic-facing. The segment at 621–646 (DGTVSDESGVNSNSNTGSKKSVPTSS) is disordered.

This sequence belongs to the MIP/aquaporin (TC 1.A.8) family.

The protein localises to the cell membrane. It carries out the reaction glycerol(in) = glycerol(out). In terms of biological role, channel protein that mediates glycerol entry under ethanol stimulation. Does not seem to mediate glycerol uptake under standard conditions. The protein is Aquaglycerol porin AQY3 of Saccharomyces cerevisiae (strain ATCC 204508 / S288c) (Baker's yeast).